A 200-amino-acid chain; its full sequence is Recombination protein RecR (200 aa).

The C4-type zinc finger occupies 57 to 72; the sequence is CSQCRTFTEQETCAIC. Residues 81–176 form the Toprim domain; sequence GLLCVVEMPA…KVSRIAHGIP (96 aa).

Belongs to the RecR family.

Its function is as follows. May play a role in DNA repair. It seems to be involved in an RecBC-independent recombinational process of DNA repair. It may act with RecF and RecO. The protein is Recombination protein RecR of Actinobacillus succinogenes (strain ATCC 55618 / DSM 22257 / CCUG 43843 / 130Z).